Consider the following 589-residue polypeptide: ATP-dependent lipid A-core flippase (589 aa).

The next 5 membrane-spanning stretches (helical) occupy residues 23–43, 60–80, 153–173, 249–269, and 272–292; these read WPIF…DAGF, LVFI…RGAA, VGLL…FLVI, VGTS…LFFA, and PSFH…IMML. Positions 27–307 constitute an ABC transmembrane type-1 domain; the sequence is LIGVVGMIAV…LTMVNSYIQK (281 aa). An ABC transporter domain is found at 339-575; the sequence is IEYQGVSFAY…NGAYAELYRM (237 aa). Position 373 to 380 (373 to 380) interacts with ATP; sequence GRSGAGKS.

The protein belongs to the ABC transporter superfamily. Lipid exporter (TC 3.A.1.106) family. In terms of assembly, homodimer.

The protein localises to the cell inner membrane. The enzyme catalyses ATP + H2O + lipid A-core oligosaccharideSide 1 = ADP + phosphate + lipid A-core oligosaccharideSide 2.. In terms of biological role, involved in lipopolysaccharide (LPS) biosynthesis. Translocates lipid A-core from the inner to the outer leaflet of the inner membrane. Transmembrane domains (TMD) form a pore in the inner membrane and the ATP-binding domain (NBD) is responsible for energy generation. In Coxiella burnetii (strain RSA 493 / Nine Mile phase I), this protein is ATP-dependent lipid A-core flippase.